The following is an 839-amino-acid chain: Elongation factor 2 (839 aa).

Residues 17–248 enclose the tr-type G domain; that stretch reads ENIRNMSVIA…MGRLWGDSYF (232 aa). Residues 26–33, 156–159, and 211–213 each bind GTP; these read AHVDHGKT, NKVD, and SGL. At His698 the chain carries Diphthamide.

This sequence belongs to the TRAFAC class translation factor GTPase superfamily. Classic translation factor GTPase family. EF-G/EF-2 subfamily. Phosphorylation by EF-2 kinase completely inactivates EF-2.

Its subcellular location is the cytoplasm. The catalysed reaction is GTP + H2O = GDP + phosphate + H(+). In terms of biological role, catalyzes the GTP-dependent ribosomal translocation step during translation elongation. During this step, the ribosome changes from the pre-translocational (PRE) to the post-translocational (POST) state as the newly formed A-site-bound peptidyl-tRNA and P-site-bound deacylated tRNA move to the P and E sites, respectively. Catalyzes the coordinated movement of the two tRNA molecules, the mRNA and conformational changes in the ribosome. The protein is Elongation factor 2 (efbA) of Dictyostelium discoideum (Social amoeba).